Here is a 777-residue protein sequence, read N- to C-terminus: Phosphoribosylformylglycinamidine synthase subunit PurL (777 aa).

Residue His-50 is part of the active site. The ATP site is built by Tyr-53 and Lys-92. Residue Glu-94 coordinates Mg(2+). Substrate-binding positions include 95–98 and Arg-117; that span reads SHNH. His-96 functions as the Proton acceptor in the catalytic mechanism. Asp-118 contacts Mg(2+). Residue Gln-241 coordinates substrate. Residue Asp-269 coordinates Mg(2+). Residue 313-315 coordinates substrate; the sequence is ESQ. Residues Asp-520 and Gly-557 each coordinate ATP. Residue Asn-558 coordinates Mg(2+). Ser-560 is a substrate binding site.

This sequence belongs to the FGAMS family. As to quaternary structure, monomer. Part of the FGAM synthase complex composed of 1 PurL, 1 PurQ and 2 PurS subunits.

It is found in the cytoplasm. It carries out the reaction N(2)-formyl-N(1)-(5-phospho-beta-D-ribosyl)glycinamide + L-glutamine + ATP + H2O = 2-formamido-N(1)-(5-O-phospho-beta-D-ribosyl)acetamidine + L-glutamate + ADP + phosphate + H(+). The protein operates within purine metabolism; IMP biosynthesis via de novo pathway; 5-amino-1-(5-phospho-D-ribosyl)imidazole from N(2)-formyl-N(1)-(5-phospho-D-ribosyl)glycinamide: step 1/2. Functionally, part of the phosphoribosylformylglycinamidine synthase complex involved in the purines biosynthetic pathway. Catalyzes the ATP-dependent conversion of formylglycinamide ribonucleotide (FGAR) and glutamine to yield formylglycinamidine ribonucleotide (FGAM) and glutamate. The FGAM synthase complex is composed of three subunits. PurQ produces an ammonia molecule by converting glutamine to glutamate. PurL transfers the ammonia molecule to FGAR to form FGAM in an ATP-dependent manner. PurS interacts with PurQ and PurL and is thought to assist in the transfer of the ammonia molecule from PurQ to PurL. This is Phosphoribosylformylglycinamidine synthase subunit PurL from Trichormus variabilis (strain ATCC 29413 / PCC 7937) (Anabaena variabilis).